Consider the following 199-residue polypeptide: NAD(P)H dehydrogenase (quinone) (199 aa).

A Flavodoxin-like domain is found at 4–190; sequence VLVLYYSAYG…AGARYQGKTI (187 aa). FMN is bound by residues 10–15 and 78–80; these read SAYGHI and TRF. Tyrosine 12 provides a ligand contact to NAD(+). Residue tryptophan 98 coordinates substrate. FMN contacts are provided by residues 113–119 and histidine 134; that span reads STATQHG.

The protein belongs to the WrbA family. FMN is required as a cofactor.

The enzyme catalyses a quinone + NADH + H(+) = a quinol + NAD(+). It catalyses the reaction a quinone + NADPH + H(+) = a quinol + NADP(+). This chain is NAD(P)H dehydrogenase (quinone), found in Rhodopseudomonas palustris (strain BisB5).